Here is a 266-residue protein sequence, read N- to C-terminus: Glucosamine-6-phosphate deaminase (266 aa).

Asp-72 functions as the Proton acceptor; for enolization step in the catalytic mechanism. Asp-141 functions as the For ring-opening step in the catalytic mechanism. His-143 serves as the catalytic Proton acceptor; for ring-opening step. Glu-148 serves as the catalytic For ring-opening step.

It belongs to the glucosamine/galactosamine-6-phosphate isomerase family. NagB subfamily. As to quaternary structure, homohexamer.

It catalyses the reaction alpha-D-glucosamine 6-phosphate + H2O = beta-D-fructose 6-phosphate + NH4(+). It participates in amino-sugar metabolism; N-acetylneuraminate degradation; D-fructose 6-phosphate from N-acetylneuraminate: step 5/5. With respect to regulation, allosterically activated by N-acetylglucosamine 6-phosphate (GlcNAc6P). Its function is as follows. Catalyzes the reversible isomerization-deamination of glucosamine 6-phosphate (GlcN6P) to form fructose 6-phosphate (Fru6P) and ammonium ion. The chain is Glucosamine-6-phosphate deaminase from Klebsiella pneumoniae (strain 342).